Consider the following 326-residue polypeptide: Vitamin B12 import system permease protein BtuC (326 aa).

Helical transmembrane passes span 15 to 35, 61 to 81, 88 to 108, 112 to 132, 146 to 166, 184 to 204, 240 to 260, 274 to 294, and 302 to 322; these read WLLC…CAGE, LAVL…QALF, PGLL…VLLG, LPNW…TLIL, LLAG…AIYF, GGVD…LLWI, GWMV…GLVI, VLLP…DVVA, and ELPI…WLLL.

Belongs to the binding-protein-dependent transport system permease family. FecCD subfamily. As to quaternary structure, the complex is composed of two ATP-binding proteins (BtuD), two transmembrane proteins (BtuC) and a solute-binding protein (BtuF).

It localises to the cell inner membrane. Its function is as follows. Part of the ABC transporter complex BtuCDF involved in vitamin B12 import. Involved in the translocation of the substrate across the membrane. The sequence is that of Vitamin B12 import system permease protein BtuC from Escherichia coli O8 (strain IAI1).